Reading from the N-terminus, the 300-residue chain is Transcription initiation factor IIB (300 aa).

The TFIIB-type zinc finger occupies 3-34; it reads KQRVCPVCGSTEFIYDPERGEIVCARCGYVIE. 4 residues coordinate Zn(2+): cysteine 7, cysteine 10, cysteine 26, and cysteine 29. 2 tandem repeats follow at residues 114–197 and 210–291.

It belongs to the TFIIB family.

In terms of biological role, stabilizes TBP binding to an archaeal box-A promoter. Also responsible for recruiting RNA polymerase II to the pre-initiation complex (DNA-TBP-TFIIB). The chain is Transcription initiation factor IIB from Pyrococcus abyssi (strain GE5 / Orsay).